The following is a 337-amino-acid chain: 5-formaminoimidazole-4-carboxamide-1-(beta)-D-ribofuranosyl 5'-monophosphate synthetase (337 aa).

The 5-amino-1-(5-phospho-beta-D-ribosyl)imidazole-4-carboxamide site is built by His-23 and Ser-87. An ATP-grasp domain is found at 121–328 (MRLLEYAGIP…IAHEIVNAVK (208 aa)). Residues 144–191 (PVIV…VPAY) and Glu-213 each bind ATP. Asn-233 contacts 5-amino-1-(5-phospho-beta-D-ribosyl)imidazole-4-carboxamide. Residues Glu-272 and Glu-285 each contribute to the Mg(2+) site.

Belongs to the phosphohexose mutase family. It depends on Mg(2+) as a cofactor. Requires Mn(2+) as cofactor.

The catalysed reaction is 5-amino-1-(5-phospho-beta-D-ribosyl)imidazole-4-carboxamide + formate + ATP = 5-formamido-1-(5-phospho-D-ribosyl)imidazole-4-carboxamide + ADP + phosphate. The protein operates within purine metabolism; IMP biosynthesis via de novo pathway; 5-formamido-1-(5-phospho-D-ribosyl)imidazole-4-carboxamide from 5-amino-1-(5-phospho-D-ribosyl)imidazole-4-carboxamide (formate route): step 1/1. In terms of biological role, catalyzes the ATP- and formate-dependent formylation of 5-aminoimidazole-4-carboxamide-1-beta-d-ribofuranosyl 5'-monophosphate (AICAR) to 5-formaminoimidazole-4-carboxamide-1-beta-d-ribofuranosyl 5'-monophosphate (FAICAR) in the absence of folates. The protein is 5-formaminoimidazole-4-carboxamide-1-(beta)-D-ribofuranosyl 5'-monophosphate synthetase of Caldivirga maquilingensis (strain ATCC 700844 / DSM 13496 / JCM 10307 / IC-167).